The chain runs to 197 residues: uncharacterized protein (197 aa).

An N-terminal signal peptide occupies residues 1-23 (MSARAPKELRLALPPCLLNRTFA). Topologically, residues 24–61 (SPNASGSGNTGARGPGAVGSGTCITQVGQQLFQSFSST) are extracellular. An N-linked (GlcNAc...) asparagine glycan is attached at Asn-26. Residues 62–82 (LVLIVLVTLIFCLIVLSLSTF) traverse the membrane as a helical segment. The Cytoplasmic segment spans residues 83-197 (HIHKRRMKKR…EGLLQTVVLS (115 aa)). A disordered region spans residues 94–180 (MQRAQEEYER…SSPQGAHAAS (87 aa)). 2 stretches are compositionally biased toward basic and acidic residues: residues 96–107 (RAQEEYERDHCS) and 125–136 (HAKETRLERQPR). A compositionally biased stretch (low complexity) spans 141–161 (CAPSNASSLSSSSPGLPCQGP). Positions 162-171 (CAPPPPPPAS) are enriched in pro residues.

The protein localises to the membrane. This is an uncharacterized protein from Homo sapiens (Human).